The sequence spans 279 residues: Shikimate dehydrogenase (NADP(+)) (279 aa).

Shikimate is bound by residues Ser-21–Ser-23 and Thr-68. Lys-72 (proton acceptor) is an active-site residue. Residue Glu-84 participates in NADP(+) binding. The shikimate site is built by Asn-93 and Asp-109. Residues Gly-133–Ala-137, Asn-157–Lys-162, and Met-220 contribute to the NADP(+) site. Tyr-222 lines the shikimate pocket. Gly-244 is an NADP(+) binding site.

The protein belongs to the shikimate dehydrogenase family. As to quaternary structure, homodimer.

It catalyses the reaction shikimate + NADP(+) = 3-dehydroshikimate + NADPH + H(+). Its pathway is metabolic intermediate biosynthesis; chorismate biosynthesis; chorismate from D-erythrose 4-phosphate and phosphoenolpyruvate: step 4/7. In terms of biological role, involved in the biosynthesis of the chorismate, which leads to the biosynthesis of aromatic amino acids. Catalyzes the reversible NADPH linked reduction of 3-dehydroshikimate (DHSA) to yield shikimate (SA). The protein is Shikimate dehydrogenase (NADP(+)) of Shewanella halifaxensis (strain HAW-EB4).